The primary structure comprises 49 residues: RTCESQSHKFKGPCFSDSNCATVCRTENFPRGQCNQHHVERKCYCERSC.

4 disulfides stabilise this stretch: cysteine 3–cysteine 49, cysteine 14–cysteine 34, cysteine 20–cysteine 43, and cysteine 24–cysteine 45.

Plant defense peptide. In Triticum kiharae (Wheat), this protein is Defensin Tk-AMP-D2.